We begin with the raw amino-acid sequence, 77 residues long: UPF0401 protein c3666 (77 aa).

Belongs to the UPF0401 family.

This is UPF0401 protein c3666 from Escherichia coli O6:H1 (strain CFT073 / ATCC 700928 / UPEC).